Here is a 333-residue protein sequence, read N- to C-terminus: Adenosine deaminase (333 aa).

2 residues coordinate Zn(2+): H12 and H14. Residues H14, D16, and G170 each coordinate substrate. H197 contributes to the Zn(2+) binding site. Residue E200 is the Proton donor of the active site. D278 lines the Zn(2+) pocket. D279 contributes to the substrate binding site.

The protein belongs to the metallo-dependent hydrolases superfamily. Adenosine and AMP deaminases family. Adenosine deaminase subfamily. Zn(2+) is required as a cofactor.

The catalysed reaction is adenosine + H2O + H(+) = inosine + NH4(+). It catalyses the reaction 2'-deoxyadenosine + H2O + H(+) = 2'-deoxyinosine + NH4(+). Its function is as follows. Catalyzes the hydrolytic deamination of adenosine and 2-deoxyadenosine. This Klebsiella pneumoniae (strain 342) protein is Adenosine deaminase.